The following is a 325-amino-acid chain: Hydroxymethylglutaryl-CoA lyase, mitochondrial (325 aa).

Residues 1-27 (MAAMTKALPRRLVGLASLRAVSTSSMD) constitute a mitochondrion transit peptide. One can recognise a Pyruvate carboxyltransferase domain in the interval 33 to 300 (VKIVEVGPRD…HTGVNLQKLL (268 aa)). A substrate-binding site is contributed by Arg-41. Asp-42 is a binding site for a divalent metal cation. Position 48 is an N6-acetyllysine; alternate (Lys-48). At Lys-48 the chain carries N6-succinyllysine; alternate. The residue at position 111 (Lys-111) is an N6-acetyllysine. 2 positions are modified to N6-acetyllysine; alternate: Lys-137 and Lys-179. N6-succinyllysine; alternate is present on residues Lys-137 and Lys-179. The a divalent metal cation site is built by His-233 and His-235. The active site involves Cys-266. A divalent metal cation is bound at residue Asn-275. Residues 323–325 (CKL) carry the Microbody targeting signal motif. An N6-acetyllysine modification is found at Lys-324.

The protein belongs to the HMG-CoA lyase family. Homodimer; disulfide-linked. Can also form homotetramers.

Its subcellular location is the mitochondrion matrix. The protein localises to the peroxisome. The catalysed reaction is (3S)-3-hydroxy-3-methylglutaryl-CoA = acetoacetate + acetyl-CoA. Its pathway is metabolic intermediate metabolism; (S)-3-hydroxy-3-methylglutaryl-CoA degradation; acetoacetate from (S)-3-hydroxy-3-methylglutaryl-CoA: step 1/1. Mitochondrial 3-hydroxy-3-methylglutaryl-CoA lyase that catalyzes a cation-dependent cleavage of (S)-3-hydroxy-3-methylglutaryl-CoA into acetyl-CoA and acetoacetate, a key step in ketogenesis. Terminal step in leucine catabolism. Ketone bodies (beta-hydroxybutyrate, acetoacetate and acetone) are essential as an alternative source of energy to glucose, as lipid precursors and as regulators of metabolism. This chain is Hydroxymethylglutaryl-CoA lyase, mitochondrial (HMGCL), found in Macaca fascicularis (Crab-eating macaque).